The primary structure comprises 417 residues: UDP-N-acetylglucosamine 1-carboxyvinyltransferase (417 aa).

22–23 (KN) is a binding site for phosphoenolpyruvate. Arg91 is a UDP-N-acetyl-alpha-D-glucosamine binding site. The active-site Proton donor is Cys115. At Cys115 the chain carries 2-(S-cysteinyl)pyruvic acid O-phosphothioketal. UDP-N-acetyl-alpha-D-glucosamine is bound by residues 120–124 (RPVDQ), Asp304, and Ile326.

It belongs to the EPSP synthase family. MurA subfamily.

It localises to the cytoplasm. It catalyses the reaction phosphoenolpyruvate + UDP-N-acetyl-alpha-D-glucosamine = UDP-N-acetyl-3-O-(1-carboxyvinyl)-alpha-D-glucosamine + phosphate. It functions in the pathway cell wall biogenesis; peptidoglycan biosynthesis. Cell wall formation. Adds enolpyruvyl to UDP-N-acetylglucosamine. The chain is UDP-N-acetylglucosamine 1-carboxyvinyltransferase from Desulfovibrio desulfuricans (strain ATCC 27774 / DSM 6949 / MB).